We begin with the raw amino-acid sequence, 251 residues long: Ubiquinone/menaquinone biosynthesis C-methyltransferase UbiE (251 aa).

S-adenosyl-L-methionine contacts are provided by residues T74, D95, N123–A124, and S140.

This sequence belongs to the class I-like SAM-binding methyltransferase superfamily. MenG/UbiE family.

It carries out the reaction a 2-demethylmenaquinol + S-adenosyl-L-methionine = a menaquinol + S-adenosyl-L-homocysteine + H(+). The enzyme catalyses a 2-methoxy-6-(all-trans-polyprenyl)benzene-1,4-diol + S-adenosyl-L-methionine = a 5-methoxy-2-methyl-3-(all-trans-polyprenyl)benzene-1,4-diol + S-adenosyl-L-homocysteine + H(+). The protein operates within quinol/quinone metabolism; menaquinone biosynthesis; menaquinol from 1,4-dihydroxy-2-naphthoate: step 2/2. Its pathway is cofactor biosynthesis; ubiquinone biosynthesis. Functionally, methyltransferase required for the conversion of demethylmenaquinol (DMKH2) to menaquinol (MKH2) and the conversion of 2-polyprenyl-6-methoxy-1,4-benzoquinol (DDMQH2) to 2-polyprenyl-3-methyl-6-methoxy-1,4-benzoquinol (DMQH2). The sequence is that of Ubiquinone/menaquinone biosynthesis C-methyltransferase UbiE from Pectobacterium atrosepticum (strain SCRI 1043 / ATCC BAA-672) (Erwinia carotovora subsp. atroseptica).